The primary structure comprises 112 residues: DNA-binding protein TGAM_1196 (112 aa).

This sequence belongs to the PDCD5 family.

The protein is DNA-binding protein TGAM_1196 of Thermococcus gammatolerans (strain DSM 15229 / JCM 11827 / EJ3).